A 558-amino-acid polypeptide reads, in one-letter code: Formate--tetrahydrofolate ligase (558 aa).

An ATP-binding site is contributed by 66–73 (TPAGEGKT).

The protein belongs to the formate--tetrahydrofolate ligase family.

The enzyme catalyses (6S)-5,6,7,8-tetrahydrofolate + formate + ATP = (6R)-10-formyltetrahydrofolate + ADP + phosphate. Its pathway is one-carbon metabolism; tetrahydrofolate interconversion. The chain is Formate--tetrahydrofolate ligase from Clostridioides difficile (strain 630) (Peptoclostridium difficile).